The following is a 388-amino-acid chain: Pepsin A-5 (388 aa).

Positions 1 to 15 (MKWLLLLGLVALSEC) are cleaved as a signal peptide. Positions 16-62 (IMYKVPLIRKKSLRRTLSERGLLKDFLKKHNLNPARKYFPQWEAPTL) are cleaved as a propeptide — activation peptide. The region spanning 76–385 (YFGTIGIGTP…DRANNQVGLA (310 aa)) is the Peptidase A1 domain. Asp94 is a catalytic residue. Cys107 and Cys112 are joined by a disulfide. At Ser130 the chain carries Phosphoserine. A disulfide bridge links Cys268 with Cys272. The active site involves Asp277. A disulfide bridge connects residues Cys311 and Cys344.

The protein belongs to the peptidase A1 family.

The protein localises to the secreted. It carries out the reaction Preferential cleavage: hydrophobic, preferably aromatic, residues in P1 and P1' positions. Cleaves 1-Phe-|-Val-2, 4-Gln-|-His-5, 13-Glu-|-Ala-14, 14-Ala-|-Leu-15, 15-Leu-|-Tyr-16, 16-Tyr-|-Leu-17, 23-Gly-|-Phe-24, 24-Phe-|-Phe-25 and 25-Phe-|-Tyr-26 bonds in the B chain of insulin.. Its function is as follows. Shows particularly broad specificity; although bonds involving phenylalanine and leucine are preferred, many others are also cleaved to some extent. The sequence is that of Pepsin A-5 (PGA5) from Homo sapiens (Human).